Reading from the N-terminus, the 175-residue chain is Inosine/xanthosine triphosphatase (175 aa).

Position 8 to 13 (8 to 13) interacts with substrate; it reads TTNPAK. Residues E38 and E68 each contribute to the Mg(2+) site. 68–69 contacts substrate; the sequence is EA.

This sequence belongs to the YjjX NTPase family. Homodimer. The cofactor is Mg(2+). It depends on Mn(2+) as a cofactor.

The enzyme catalyses XTP + H2O = XDP + phosphate + H(+). It catalyses the reaction ITP + H2O = IDP + phosphate + H(+). Phosphatase that hydrolyzes non-canonical purine nucleotides such as XTP and ITP to their respective diphosphate derivatives. Probably excludes non-canonical purines from DNA/RNA precursor pool, thus preventing their incorporation into DNA/RNA and avoiding chromosomal lesions. The polypeptide is Inosine/xanthosine triphosphatase (yjjX) (Escherichia coli O127:H6 (strain E2348/69 / EPEC)).